The following is a 141-amino-acid chain: ATP synthase epsilon chain (141 aa).

The protein belongs to the ATPase epsilon chain family. In terms of assembly, F-type ATPases have 2 components, CF(1) - the catalytic core - and CF(0) - the membrane proton channel. CF(1) has five subunits: alpha(3), beta(3), gamma(1), delta(1), epsilon(1). CF(0) has three main subunits: a, b and c.

It localises to the cell membrane. Its function is as follows. Produces ATP from ADP in the presence of a proton gradient across the membrane. This is ATP synthase epsilon chain from Lactococcus lactis subsp. cremoris (strain MG1363).